A 313-amino-acid chain; its full sequence is Porphobilinogen deaminase (313 aa).

The residue at position 241 (Cys-241) is an S-(dipyrrolylmethanemethyl)cysteine.

This sequence belongs to the HMBS family. As to quaternary structure, monomer. Dipyrromethane is required as a cofactor.

The enzyme catalyses 4 porphobilinogen + H2O = hydroxymethylbilane + 4 NH4(+). It participates in porphyrin-containing compound metabolism; protoporphyrin-IX biosynthesis; coproporphyrinogen-III from 5-aminolevulinate: step 2/4. Its pathway is porphyrin-containing compound metabolism; chlorophyll biosynthesis. Tetrapolymerization of the monopyrrole PBG into the hydroxymethylbilane pre-uroporphyrinogen in several discrete steps. The sequence is that of Porphobilinogen deaminase from Chlorobium chlorochromatii (strain CaD3).